A 127-amino-acid chain; its full sequence is MAIVGLGTDIVEIERIQAHVARAGDKLAKRVLTEVELAIYTAHSQPSRYLAKRFAAKEAAAKALGTGIGRGVSFQHIHIGNNEDGAPTIHFTEGALARLQQLKATVGHISIADEKSYAIATVIIESQ.

Residues D9 and E58 each coordinate Mg(2+).

This sequence belongs to the P-Pant transferase superfamily. AcpS family. The cofactor is Mg(2+).

The protein resides in the cytoplasm. It carries out the reaction apo-[ACP] + CoA = holo-[ACP] + adenosine 3',5'-bisphosphate + H(+). Transfers the 4'-phosphopantetheine moiety from coenzyme A to a Ser of acyl-carrier-protein. This is Holo-[acyl-carrier-protein] synthase from Shewanella baltica (strain OS155 / ATCC BAA-1091).